Reading from the N-terminus, the 180-residue chain is Nucleoside-triphosphatase THEP1 (180 aa).

ATP is bound by residues 8 to 15 (GPVGSIKA) and 100 to 107 (VIIIDELG).

Belongs to the THEP1 NTPase family.

It catalyses the reaction a ribonucleoside 5'-triphosphate + H2O = a ribonucleoside 5'-diphosphate + phosphate + H(+). Has nucleotide phosphatase activity towards ATP, GTP, CTP, TTP and UTP. May hydrolyze nucleoside diphosphates with lower efficiency. This Picrophilus torridus (strain ATCC 700027 / DSM 9790 / JCM 10055 / NBRC 100828 / KAW 2/3) protein is Nucleoside-triphosphatase THEP1.